The following is a 912-amino-acid chain: Protein translocase subunit SecA (912 aa).

Residues Q86, 104–108 (GEGKT), and D494 contribute to the ATP site. The disordered stretch occupies residues 860–912 (EAPEKPAQLQYTAPGEDGASQTRVEGRSSGRSGNPAKAAQDGARKPAPKKKKR).

Belongs to the SecA family. In terms of assembly, monomer and homodimer. Part of the essential Sec protein translocation apparatus which comprises SecA, SecYEG and auxiliary proteins SecDF. Other proteins may also be involved.

Its subcellular location is the cell membrane. It localises to the cytoplasm. It carries out the reaction ATP + H2O + cellular proteinSide 1 = ADP + phosphate + cellular proteinSide 2.. Its function is as follows. Part of the Sec protein translocase complex. Interacts with the SecYEG preprotein conducting channel. Has a central role in coupling the hydrolysis of ATP to the transfer of proteins into and across the cell membrane, serving as an ATP-driven molecular motor driving the stepwise translocation of polypeptide chains across the membrane. The protein is Protein translocase subunit SecA of Arthrobacter sp. (strain FB24).